A 426-amino-acid chain; its full sequence is Tol-Pal system protein TolB (426 aa).

An N-terminal signal peptide occupies residues 1 to 24 (MKLKSRYTSLISVVSIFFSSMVMA).

This sequence belongs to the TolB family. In terms of assembly, the Tol-Pal system is composed of five core proteins: the inner membrane proteins TolA, TolQ and TolR, the periplasmic protein TolB and the outer membrane protein Pal. They form a network linking the inner and outer membranes and the peptidoglycan layer.

The protein localises to the periplasm. In terms of biological role, part of the Tol-Pal system, which plays a role in outer membrane invagination during cell division and is important for maintaining outer membrane integrity. This chain is Tol-Pal system protein TolB, found in Haemophilus ducreyi (strain 35000HP / ATCC 700724).